Reading from the N-terminus, the 219-residue chain is Vesicle-associated membrane protein 711 (219 aa).

Position 2 is an N-acetylalanine (alanine 2). The Cytoplasmic portion of the chain corresponds to 2–189 (AILYALVARG…RSNVWWRNCK (188 aa)). The Longin domain maps to 7-111 (LVARGTVVLS…AMNEEFSRVL (105 aa)). Residues 126–186 (RINRIKGEMN…RRFRSNVWWR (61 aa)) enclose the v-SNARE coiled-coil homology domain. Residues 190 to 210 (LTVLLILLLLVIIYIAVAFLC) form a helical; Anchor for type IV membrane protein membrane-spanning segment. Over 211–219 (HGPTLPSCI) the chain is Vesicular.

Belongs to the synaptobrevin family. In terms of tissue distribution, expressed in flowers, leaves, stems and roots.

It is found in the vacuole membrane. The protein resides in the prevacuolar compartment membrane. In terms of biological role, involved in the targeting and/or fusion of transport vesicles to their target membrane. The sequence is that of Vesicle-associated membrane protein 711 from Arabidopsis thaliana (Mouse-ear cress).